The chain runs to 66 residues: Large ribosomal subunit protein bL31 (66 aa).

4 residues coordinate Zn(2+): Cys-16, Cys-18, Cys-36, and Cys-39.

The protein belongs to the bacterial ribosomal protein bL31 family. Type A subfamily. As to quaternary structure, part of the 50S ribosomal subunit. Zn(2+) serves as cofactor.

Its function is as follows. Binds the 23S rRNA. This Bacillus licheniformis (strain ATCC 14580 / DSM 13 / JCM 2505 / CCUG 7422 / NBRC 12200 / NCIMB 9375 / NCTC 10341 / NRRL NRS-1264 / Gibson 46) protein is Large ribosomal subunit protein bL31.